A 416-amino-acid chain; its full sequence is Cell division protein FtsZ (416 aa).

Residues 20–24 (GGGVN), 107–109 (GTG), E138, R142, and D186 contribute to the GTP site. A compositionally biased stretch (polar residues) spans 319–335 (QETNANNSSPAQRQAES). The segment at 319–416 (QETNANNSSP…DSLDFPDFLK (98 aa)) is disordered. The span at 376-392 (QDDDIPDDAGFDVDLPA) shows a compositional bias: acidic residues. Residues 404–416 (ARKDSLDFPDFLK) show a composition bias toward basic and acidic residues.

It belongs to the FtsZ family. As to quaternary structure, homodimer. Polymerizes to form a dynamic ring structure in a strictly GTP-dependent manner. Interacts directly with several other division proteins.

It localises to the cytoplasm. Functionally, essential cell division protein that forms a contractile ring structure (Z ring) at the future cell division site. The regulation of the ring assembly controls the timing and the location of cell division. One of the functions of the FtsZ ring is to recruit other cell division proteins to the septum to produce a new cell wall between the dividing cells. Binds GTP and shows GTPase activity. The chain is Cell division protein FtsZ from Kocuria rhizophila (strain ATCC 9341 / DSM 348 / NBRC 103217 / DC2201).